A 481-amino-acid chain; its full sequence is Sestrin-1 (481 aa).

Positions 63–244 (FADAFTDLGR…ICDITNGNHG (182 aa)) are N-terminal domain; may mediate the alkylhydroperoxide reductase activity. The active-site Cysteine sulfenic acid (-SOH) intermediate is Cys122. The interval 295-316 (KTESMVFSTEDEDPPPDIDVSR) is disordered. Residues 310 to 481 (PDIDVSRHFE…ALRAITRYMT (172 aa)) form a C-terminal domain; mediates TORC1 regulation region. L-leucine contacts are provided by residues 375–378 (TYNT), Thr387, and Glu452.

The protein belongs to the sestrin family.

It is found in the nucleus. The protein resides in the cytoplasm. It catalyses the reaction a hydroperoxide + L-cysteinyl-[protein] = S-hydroxy-L-cysteinyl-[protein] + an alcohol. In terms of biological role, may function as an intracellular leucine sensor that negatively regulates the TORC1 signaling pathway through the GATOR complex. In absence of leucine, binds the GATOR subcomplex GATOR2 and prevents TORC1 signaling. Binding of leucine to SESN2 disrupts its interaction with GATOR2 thereby activating the TORC1 signaling pathway. This stress-inducible metabolic regulator may also play a role in protection against oxidative and genotoxic stresses. May prevent the accumulation of reactive oxygen species (ROS) through the alkylhydroperoxide reductase activity born by the N-terminal domain of the protein. In Xenopus laevis (African clawed frog), this protein is Sestrin-1.